Here is a 404-residue protein sequence, read N- to C-terminus: Translation initiation factor eIF2B subunit gamma (404 aa).

It belongs to the eIF-2B gamma/epsilon subunits family. As to quaternary structure, component of the translation initiation factor 2B (eIF2B) complex which is a heterodecamer of two sets of five different subunits: alpha, beta, gamma, delta and epsilon. Subunits alpha, beta and delta comprise a regulatory subcomplex and subunits epsilon and gamma comprise a catalytic subcomplex. Within the complex, the hexameric regulatory complex resides at the center, with the two heterodimeric catalytic subcomplexes bound on opposite sides.

The protein localises to the cytoplasm. The protein resides in the cytosol. Its function is as follows. Acts as a component of the translation initiation factor 2B (eIF2B) complex, which catalyzes the exchange of GDP for GTP on the eukaryotic initiation factor 2 (eIF2) complex gamma subunit. Its guanine nucleotide exchange factor activity is repressed when bound to eIF2 complex phosphorylated on the alpha subunit, thereby limiting the amount of methionyl-initiator methionine tRNA available to the ribosome and consequently global translation is repressed. The sequence is that of Translation initiation factor eIF2B subunit gamma from Caenorhabditis elegans.